A 278-amino-acid chain; its full sequence is TATA box-binding protein-associated factor RNA polymerase I subunit D (278 aa).

2 disordered regions span residues 20 to 71 (ANRS…SSFE) and 88 to 116 (KKRY…RNPI). Residues 22–33 (RSDNSSDSSLFK) show a composition bias toward polar residues. Serine 23 bears the Phosphoserine mark. Over residues 88-99 (KKRYKKKKKRRY) the composition is skewed to basic residues. 2 positions are modified to phosphoserine: serine 138 and serine 234.

As to quaternary structure, component of the transcription factor SL1/TIF-IB complex, composed of TBP and at least TAF1A, TAF1B, TAF1C and TAF1D. Interacts with UBTF.

It localises to the nucleus. Component of the transcription factor SL1/TIF-IB complex, which is involved in the assembly of the PIC (preinitiation complex) during RNA polymerase I-dependent transcription. The rate of PIC formation probably is primarily dependent on the rate of association of SL1/TIF-IB with the rDNA promoter. SL1/TIF-IB is involved in stabilization of nucleolar transcription factor 1/UBTF on rDNA. Formation of SL1/TIF-IB excludes the association of TBP with TFIID subunits. The protein is TATA box-binding protein-associated factor RNA polymerase I subunit D (TAF1D) of Homo sapiens (Human).